Reading from the N-terminus, the 103-residue chain is Small ribosomal subunit protein uS10 (103 aa).

It belongs to the universal ribosomal protein uS10 family. Part of the 30S ribosomal subunit.

Involved in the binding of tRNA to the ribosomes. This is Small ribosomal subunit protein uS10 from Desulfatibacillum aliphaticivorans.